A 143-amino-acid polypeptide reads, in one-letter code: Turripeptide VIII-01 (143 aa).

The first 23 residues, 1–23 (MALSLDILMSVTMVTAVLTTVNA), serve as a signal peptide directing secretion. A propeptide spanning residues 24–32 (EYKDSRLDS) is cleaved from the precursor.

Contains 4 disulfide bonds. As to expression, expressed by the venom duct.

The protein localises to the secreted. The protein is Turripeptide VIII-01 of Gemmula speciosa (Splendid gem-turris).